A 443-amino-acid polypeptide reads, in one-letter code: Adenylyltransferase and sulfurtransferase UBA4 (443 aa).

ATP-binding positions include G83, D104, 111–115 (SNLHR), K128, and 172–173 (DT). Residues C214 and C217 each coordinate Zn(2+). The Glycyl thioester intermediate; for adenylyltransferase activity role is filled by C231. 2 residues coordinate Zn(2+): C292 and C295. The region spanning 343-441 (QSKAPVLLDV…WSDIVNPKFP (99 aa)) is the Rhodanese domain. The Cysteine persulfide intermediate; for sulfurtransferase activity role is filled by C400.

It in the N-terminal section; belongs to the HesA/MoeB/ThiF family. UBA4 subfamily. The cofactor is Zn(2+).

It localises to the cytoplasm. It is found in the cytosol. The protein operates within tRNA modification; 5-methoxycarbonylmethyl-2-thiouridine-tRNA biosynthesis. Plays a central role in 2-thiolation of mcm(5)S(2)U at tRNA wobble positions of cytosolic tRNA(Lys), tRNA(Glu) and tRNA(Gln). Acts by mediating the C-terminal thiocarboxylation of sulfur carrier URM1. Its N-terminus first activates URM1 as acyl-adenylate (-COAMP), then the persulfide sulfur on the catalytic cysteine is transferred to URM1 to form thiocarboxylation (-COSH) of its C-terminus. The reaction probably involves hydrogen sulfide that is generated from the persulfide intermediate and that acts as a nucleophile towards URM1. Subsequently, a transient disulfide bond is formed. Does not use thiosulfate as sulfur donor; NFS1 probably acting as a sulfur donor for thiocarboxylation reactions. Prior mcm(5) tRNA modification by the elongator complex is required for 2-thiolation. May also be involved in protein urmylation. The protein is Adenylyltransferase and sulfurtransferase UBA4 of Scheffersomyces stipitis (strain ATCC 58785 / CBS 6054 / NBRC 10063 / NRRL Y-11545) (Yeast).